A 406-amino-acid chain; its full sequence is Probable transcription factor FPSE_09188 (406 aa).

The disordered stretch occupies residues 1–72 (MELPTYAVSQ…PKGSSSRCNG (72 aa)). Low complexity predominate over residues 7 to 20 (AVSQSLLASRSVSS).

This sequence belongs to the bZIP family.

Its subcellular location is the nucleus. Functionally, the two putative transcription factors FPSE_09188 and FPSE_09189 could be responsible for orchestrating expression of the W493 A and B biosynthesis cluster genes. W493 A and B consist of six amino acid residues D-allo-thr, L-Ala, D-Ala, L-Gln, D-Tyr, and L-Val/L-Ile linked to a 3-hydroxy-4-methyltetradecanoic acid polyketide chain. The sequence is that of Probable transcription factor FPSE_09188 from Fusarium pseudograminearum (strain CS3096) (Wheat and barley crown-rot fungus).